The primary structure comprises 442 residues: ATP-dependent protease ATPase subunit HslU (442 aa).

Residues Ile18 and 60-65 (GVGKTE) contribute to the ATP site. The disordered stretch occupies residues 137–156 (PKPKNDWESTETDSSSNTRQ). Residues Asp255, Glu320, and Arg392 each contribute to the ATP site.

This sequence belongs to the ClpX chaperone family. HslU subfamily. A double ring-shaped homohexamer of HslV is capped on each side by a ring-shaped HslU homohexamer. The assembly of the HslU/HslV complex is dependent on binding of ATP.

Its subcellular location is the cytoplasm. ATPase subunit of a proteasome-like degradation complex; this subunit has chaperone activity. The binding of ATP and its subsequent hydrolysis by HslU are essential for unfolding of protein substrates subsequently hydrolyzed by HslV. HslU recognizes the N-terminal part of its protein substrates and unfolds these before they are guided to HslV for hydrolysis. The polypeptide is ATP-dependent protease ATPase subunit HslU (Shewanella baltica (strain OS155 / ATCC BAA-1091)).